Here is a 399-residue protein sequence, read N- to C-terminus: Acetylornithine aminotransferase (399 aa).

Residues 99 to 100 (GA) and Phe132 each bind pyridoxal 5'-phosphate. Residue Arg135 participates in N(2)-acetyl-L-ornithine binding. A pyridoxal 5'-phosphate-binding site is contributed by 217–220 (DEVQ). Lys246 carries the post-translational modification N6-(pyridoxal phosphate)lysine. Thr274 contributes to the N(2)-acetyl-L-ornithine binding site. A pyridoxal 5'-phosphate-binding site is contributed by Thr275.

Belongs to the class-III pyridoxal-phosphate-dependent aminotransferase family. ArgD subfamily. In terms of assembly, homodimer. Pyridoxal 5'-phosphate is required as a cofactor.

It is found in the cytoplasm. It catalyses the reaction N(2)-acetyl-L-ornithine + 2-oxoglutarate = N-acetyl-L-glutamate 5-semialdehyde + L-glutamate. Its pathway is amino-acid biosynthesis; L-arginine biosynthesis; N(2)-acetyl-L-ornithine from L-glutamate: step 4/4. The polypeptide is Acetylornithine aminotransferase (Agrobacterium fabrum (strain C58 / ATCC 33970) (Agrobacterium tumefaciens (strain C58))).